A 96-amino-acid chain; its full sequence is MIGKEVTLQDIVLELTEPQTVDLHCEEELPEQDTEVEPERRAYKIILCCGGGCGTRLRLFVAATQFGIRGLQDLLLEEVVILCPDCRNSDLQHGGQ.

An E7 terminal domain region spans residues M1 to E37. The LXCXE motif; interaction with host RB1 and TMEM173/STING motif lies at L23 to E27. A zinc finger lies at C49–C86. The Nuclear export signal signature appears at I68–L76.

This sequence belongs to the papillomaviridae E7 protein family. Homodimer. Homooligomer. Interacts with host RB1; this interaction induces dissociation of RB1-E2F1 complex thereby disrupting RB1 activity. Interacts with host EP300; this interaction represses EP300 transcriptional activity. Interacts with protein E2; this interaction inhibits E7 oncogenic activity. Interacts with host TMEM173/STING; this interaction impairs the ability of TMEM173/STING to sense cytosolic DNA and promote the production of type I interferon (IFN-alpha and IFN-beta). In terms of processing, highly phosphorylated.

The protein localises to the host cytoplasm. It is found in the host nucleus. Its function is as follows. Plays a role in viral genome replication by driving entry of quiescent cells into the cell cycle. Stimulation of progression from G1 to S phase allows the virus to efficiently use the cellular DNA replicating machinery to achieve viral genome replication. E7 protein has both transforming and trans-activating activities. Induces the disassembly of the E2F1 transcription factor from RB1, with subsequent transcriptional activation of E2F1-regulated S-phase genes. Interferes with host histone deacetylation mediated by HDAC1 and HDAC2, leading to transcription activation. Also plays a role in the inhibition of both antiviral and antiproliferative functions of host interferon alpha. Interaction with host TMEM173/STING impairs the ability of TMEM173/STING to sense cytosolic DNA and promote the production of type I interferon (IFN-alpha and IFN-beta). The polypeptide is Protein E7 (Homo sapiens (Human)).